The chain runs to 256 residues: DNA repair protein RecO (256 aa).

It belongs to the RecO family.

Involved in DNA repair and RecF pathway recombination. The polypeptide is DNA repair protein RecO (Shouchella clausii (strain KSM-K16) (Alkalihalobacillus clausii)).